Here is a 301-residue protein sequence, read N- to C-terminus: Probable 5-dehydro-4-deoxyglucarate dehydratase (301 aa).

This sequence belongs to the DapA family.

It carries out the reaction 5-dehydro-4-deoxy-D-glucarate + H(+) = 2,5-dioxopentanoate + CO2 + H2O. It participates in carbohydrate acid metabolism; D-glucarate degradation; 2,5-dioxopentanoate from D-glucarate: step 2/2. The protein is Probable 5-dehydro-4-deoxyglucarate dehydratase of Cereibacter sphaeroides (strain KD131 / KCTC 12085) (Rhodobacter sphaeroides).